The following is a 69-amino-acid chain: Large ribosomal subunit protein bL28 (69 aa).

The protein belongs to the bacterial ribosomal protein bL28 family.

The chain is Large ribosomal subunit protein bL28 from Oleidesulfovibrio alaskensis (strain ATCC BAA-1058 / DSM 17464 / G20) (Desulfovibrio alaskensis).